Consider the following 395-residue polypeptide: MYFKYTAAALAAVLPLCSAQTWSKCNPLEKTCPPNKGLAASTYTADFTSASALDQWEVTAGKVPVGPQGAEFTVAKQGDAPTIDTDFYFFFGKAEVVMKAAPGTGVVSSIVLESDDLDEVDWEVLGGDTTQVQTNYFGKGDTTTYDRGTYVPVATPQETFHTYTIDWTKDAVTWSIDGAVVRTLTYNDAKGGTRFPQTPMRLRLGSWAGGDPSNPKGTIEWAGGLTDYSAGPYTMYVKSVRIENANPAESYTYSDNSGSWQSIKFDGSVDISSSSSVTSSTTSTASSASSTSSKTPSTSTLATSTKATPTPSGTSSGSNSSSSAEPTTTGGTGSSNTGSGSGSGSGSGSSSSTGSSTSAGASATPELSQGAAGSIKGSVTACALVFGAVAAVLAF.

A signal peptide spans 1–19; it reads MYFKYTAAALAAVLPLCSA. Cys-25 and Cys-32 are disulfide-bonded. The 186-residue stretch at 45–230 folds into the GH16 domain; the sequence is ADFTSASALD…WAGGLTDYSA (186 aa). Glu-119 functions as the Nucleophile in the catalytic mechanism. The active-site Proton donor is the Glu-123. Positions 123, 203, 207, and 218 each coordinate chitin. A disordered region spans residues 271-374; that stretch reads ISSSSSVTSS…PELSQGAAGS (104 aa). 2 stretches are compositionally biased toward low complexity: residues 272–338 and 348–364; these read SSSS…SNTG and GSSSSTGSSTSAGASAT. N-linked (GlcNAc...) asparagine glycosylation occurs at Asn-319. The GPI-like-anchor amidated glycine moiety is linked to residue Gly-370. A propeptide spans 371–395 (removed in mature form); the sequence is AAGSIKGSVTACALVFGAVAAVLAF.

Belongs to the glycosyl hydrolase 16 family. CRH1 subfamily. The GPI-like anchor contains a phosphoceramide lipid group. The anchor position has not been determined.

It is found in the cell membrane. The protein localises to the secreted. Its subcellular location is the cell wall. The catalysed reaction is Random endo-hydrolysis of N-acetyl-beta-D-glucosaminide (1-&gt;4)-beta-linkages in chitin and chitodextrins.. Dual chitinase/transglycosylase that plays a role in cell wall architecture. Chitinase and transglycosylase activities are coupled. Required for the polysaccharide cross-linking at the septa and the cell wall. More specifically, transfers chitin to 1,6-beta-glucan in the cell wall. Chr5 shows acceptor substrate promiscuity and is also able to cross-link chitin to chitin. This Aspergillus fumigatus (strain ATCC MYA-4609 / CBS 101355 / FGSC A1100 / Af293) (Neosartorya fumigata) protein is Crh-like protein 5.